A 302-amino-acid polypeptide reads, in one-letter code: Cyclin-C (302 aa).

Positions 46-152 constitute a Cyclin N-terminal domain; that stretch reads NFITAVATEG…VYDSEFILVE (107 aa). Positions 281–302 are disordered; that stretch reads LPKPNQQPPPQQQHQHQQGYHL. Residues 292–302 show a composition bias toward low complexity; the sequence is QQHQHQQGYHL.

It belongs to the cyclin family. Cyclin C subfamily. Component of the Mediator complex.

It is found in the nucleus. Component of the Mediator complex, a coactivator involved in regulated gene transcription of nearly all RNA polymerase II-dependent genes. Mediator functions as a bridge to convey information from gene-specific regulatory proteins to the basal RNA polymerase II transcription machinery. Mediator is recruited to promoters by direct interactions with regulatory proteins and serves as a scaffold for the assembly of a functional preinitiation complex with RNA polymerase II and the general transcription factors. Binds to and activates cyclin-dependent kinase cdk-8 that phosphorylates the CTD (C-terminal domain) of the large subunit of RNA polymerase II (RNAp II), which may inhibit the formation of a transcription initiation complex. This is Cyclin-C (cic-1) from Caenorhabditis elegans.